We begin with the raw amino-acid sequence, 201 residues long: Superoxide dismutase [Fe] (201 aa).

Fe cation-binding residues include H27, H79, D161, and H165.

Belongs to the iron/manganese superoxide dismutase family. As to quaternary structure, homodimer. It depends on Fe cation as a cofactor.

It carries out the reaction 2 superoxide + 2 H(+) = H2O2 + O2. Functionally, destroys superoxide anion radicals which are normally produced within the cells and which are toxic to biological systems. This chain is Superoxide dismutase [Fe] (sodB), found in Synechococcus elongatus (strain ATCC 33912 / PCC 7942 / FACHB-805) (Anacystis nidulans R2).